A 278-amino-acid polypeptide reads, in one-letter code: uncharacterized protein (278 aa).

The span at 1–16 shows a compositional bias: basic and acidic residues; that stretch reads MFGLKVKDAQKDDQKS. 2 disordered regions span residues 1–86 and 98–126; these read MFGL…RGSN and FGTT…TPWL. 2 stretches are compositionally biased toward low complexity: residues 33–45 and 99–117; these read QGTS…RGSS and GTTS…STPS.

Belongs to the adhesin P1 family.

This is an uncharacterized protein from Mycoplasma pneumoniae (strain ATCC 29342 / M129 / Subtype 1) (Mycoplasmoides pneumoniae).